We begin with the raw amino-acid sequence, 196 residues long: Protein LSM12 homolog B (196 aa).

One can recognise a Sm domain in the interval 3 to 70; the sequence is APGPGEYFSV…LAYVSEVDII (68 aa). Residues 81-175 form the AD domain; that stretch reads ASLNFNKLVN…IVEKHFRDVE (95 aa).

It belongs to the LSM12 family.

The sequence is that of Protein LSM12 homolog B (lsm12b) from Danio rerio (Zebrafish).